The primary structure comprises 270 residues: Urease accessory protein UreD (270 aa).

The protein belongs to the UreD family. As to quaternary structure, ureD, UreF and UreG form a complex that acts as a GTP-hydrolysis-dependent molecular chaperone, activating the urease apoprotein by helping to assemble the nickel containing metallocenter of UreC. The UreE protein probably delivers the nickel.

It localises to the cytoplasm. Its function is as follows. Required for maturation of urease via the functional incorporation of the urease nickel metallocenter. The chain is Urease accessory protein UreD from Actinobacillus pleuropneumoniae serotype 3 (strain JL03).